Here is a 424-residue protein sequence, read N- to C-terminus: Adenylosuccinate synthetase (424 aa).

Residues Gly12–Lys18 and Gly40–Thr42 each bind GTP. The Proton acceptor role is filled by Asp13. Asp13 and Gly40 together coordinate Mg(2+). IMP is bound by residues Asp13–Lys16, Asn38–His41, Thr130, Arg144, Asn220, Thr235, and Arg299. His41 serves as the catalytic Proton donor. Residue Val295–Arg301 coordinates substrate. GTP-binding positions include Arg301, Lys327 to Asp329, and Gly412 to Gly414.

This sequence belongs to the adenylosuccinate synthetase family. In terms of assembly, homodimer. It depends on Mg(2+) as a cofactor.

The protein resides in the cytoplasm. The catalysed reaction is IMP + L-aspartate + GTP = N(6)-(1,2-dicarboxyethyl)-AMP + GDP + phosphate + 2 H(+). It functions in the pathway purine metabolism; AMP biosynthesis via de novo pathway; AMP from IMP: step 1/2. Functionally, plays an important role in the de novo pathway and in the salvage pathway of purine nucleotide biosynthesis. Catalyzes the first committed step in the biosynthesis of AMP from IMP. This chain is Adenylosuccinate synthetase, found in Aspergillus niger (strain ATCC MYA-4892 / CBS 513.88 / FGSC A1513).